Here is a 331-residue protein sequence, read N- to C-terminus: Proton-translocating ferredoxin:NAD(+) oxidoreductase complex subunit D (331 aa).

Helical transmembrane passes span 23 to 43, 44 to 64, and 84 to 106; these read ESVSKIMWSVCLALTPAAVFG, VFNFGIHALEVIITGIIAAVV, and AFLTGLLLSMCLPPDIPPYMVAI. Threonine 163 is modified (FMN phosphoryl threonine). 4 helical membrane passes run 196–216, 226–246, 251–271, and 273–293; these read NGSIGETSTILLVLGGLYLIY, VVMIGTVGILTWAFGGTTGIF, VFHMMAGGLVIGAFFMATDMV, and IPMTIKGQIIFALGAGALTSL.

This sequence belongs to the NqrB/RnfD family. As to quaternary structure, the complex is composed of six subunits: RnfA, RnfB, RnfC, RnfD, RnfE and RnfG. FMN is required as a cofactor.

It localises to the cell membrane. Functionally, part of a membrane-bound complex that couples electron transfer with translocation of ions across the membrane. Couples electron transfer from reduced ferredoxin to NAD(+) with translocation of H(+) out of the cell. Essential for energy conservation during autotrophic growth. Contributes to ATP synthesis during heterotrophic growth. The polypeptide is Proton-translocating ferredoxin:NAD(+) oxidoreductase complex subunit D (Clostridium ljungdahlii (strain ATCC 55383 / DSM 13528 / PETC)).